The sequence spans 150 residues: Large ribosomal subunit protein bL9 (150 aa).

It belongs to the bacterial ribosomal protein bL9 family.

In terms of biological role, binds to the 23S rRNA. The chain is Large ribosomal subunit protein bL9 from Idiomarina loihiensis (strain ATCC BAA-735 / DSM 15497 / L2-TR).